A 448-amino-acid chain; its full sequence is MSKQLVSIIDVPKHIGEEITIGAWVANKSGKGKIAFLQLRDGTAFFQGVAFKPNFIEKFGEEEGLEKFDTIKHLSQETSIYVTGMVKEDERSKFGYELDINDIEVIGKSQDYPITPKEHGTDFLMDNRHLWLRSRKQMAIQQIRNAIIYATYDFFDKNGFIKFDSPILSSNAAEDSTELFETDYFGTPAFLSQSGQLYLEAGAMALGRVFDFGPVFRAEKSKTRRHLTEFWMMDAEYSFLSHDESLDLQEAYVKALIQGAIDRAPQALEILERDVDLLKKYIAEPFKRVSYDEAIDLLQAHENDEDTDYEHLEHGDDFGSPHETWISNYFGVPTFVVNYPASFKAFYMKPVPGNPERVLCADLLAPEGYGEIIGGSMREDDYDALVAKMEELGMDRSEYEFYLDLRKYGSVPHGGFGIGIERMVTFVAGTKHIREAIPFPRMLHRIKP.

The protein belongs to the class-II aminoacyl-tRNA synthetase family. As to quaternary structure, homodimer.

The protein resides in the cytoplasm. It catalyses the reaction tRNA(Asn) + L-asparagine + ATP = L-asparaginyl-tRNA(Asn) + AMP + diphosphate + H(+). The polypeptide is Asparagine--tRNA ligase (Streptococcus thermophilus (strain CNRZ 1066)).